The primary structure comprises 322 residues: Rhomboid-like protein 16, chloroplastic (322 aa).

A chloroplast-targeting transit peptide spans 1 to 52 (MHAIFCRRVAVGCSSPQLTKLVTKQASQSRHSLSHLLPFDLSSRFVPPYVVS). 6 helical membrane-spanning segments follow: residues 110–130 (WING…AVFT), 166–186 (FSHV…YFGA), 201–221 (YFAG…LSVI), 238–258 (IGKL…MLLY), 265–285 (FGLM…LNII), and 295–315 (TLTS…WARI).

This sequence belongs to the peptidase S54 family.

It localises to the plastid. The protein localises to the chloroplast membrane. Functionally, rhomboid-type serine protease that catalyzes intramembrane proteolysis. May cleave the plastid translocon component Tic40. The chain is Rhomboid-like protein 16, chloroplastic from Arabidopsis thaliana (Mouse-ear cress).